The primary structure comprises 236 residues: Protein-L-isoaspartate O-methyltransferase 1 (236 aa).

S85 is an active-site residue.

Belongs to the methyltransferase superfamily. L-isoaspartyl/D-aspartyl protein methyltransferase family.

It localises to the cytoplasm. The enzyme catalyses [protein]-L-isoaspartate + S-adenosyl-L-methionine = [protein]-L-isoaspartate alpha-methyl ester + S-adenosyl-L-homocysteine. Functionally, catalyzes the methyl esterification of L-isoaspartyl residues in peptides and proteins that result from spontaneous decomposition of normal L-aspartyl and L-asparaginyl residues. It plays a role in the repair and/or degradation of damaged proteins. The polypeptide is Protein-L-isoaspartate O-methyltransferase 1 (Polaromonas sp. (strain JS666 / ATCC BAA-500)).